We begin with the raw amino-acid sequence, 298 residues long: Anamorsin homolog (298 aa).

The segment at 1–143 (MTQLIITHQS…IKAEKPSWKP (143 aa)) is N-terminal SAM-like domain. A linker region spans residues 143 to 162 (PEEGKVLVDDIDLEGSVPDI). Residues cysteine 175, cysteine 182, cysteine 185, and cysteine 187 each coordinate [2Fe-2S] cluster. The segment at 175-187 (CKSKERACNNCNC) is fe-S binding site A. [4Fe-4S] cluster is bound by residues cysteine 218, cysteine 221, cysteine 229, and cysteine 232. 2 short sequence motifs (cx2C motif) span residues 218–221 (CGNC) and 229–232 (CSGC). Positions 218–232 (CGNCYLGDAFRCSGC) are fe-S binding site B.

This sequence belongs to the anamorsin family. Monomer. [2Fe-2S] cluster serves as cofactor. [4Fe-4S] cluster is required as a cofactor.

The protein localises to the cytoplasm. Its subcellular location is the mitochondrion intermembrane space. Component of the cytosolic iron-sulfur (Fe-S) protein assembly (CIA) machinery. Required for the maturation of extramitochondrial Fe-S proteins. Part of an electron transfer chain functioning in an early step of cytosolic Fe-S biogenesis, facilitating the de novo assembly of a [4Fe-4S] cluster on the cytosolic Fe-S scaffold complex. Electrons are transferred from NADPH via a FAD- and FMN-containing diflavin oxidoreductase. Together with the diflavin oxidoreductase, also required for the assembly of the diferric tyrosyl radical cofactor of ribonucleotide reductase (RNR), probably by providing electrons for reduction during radical cofactor maturation in the catalytic small subunit. The protein is Anamorsin homolog of Cryptosporidium parvum (strain Iowa II).